Consider the following 424-residue polypeptide: Tyrosine--tRNA ligase (424 aa).

L-tyrosine is bound at residue tyrosine 37. A 'HIGH' region motif is present at residues 42–51 (PTADSLHLGH). An N6-acetyllysine modification is found at lysine 144. The L-tyrosine site is built by tyrosine 175 and glutamine 179. Positions 235–239 (KFGKT) match the 'KMSKS' region motif. Lysine 238 contacts ATP. An S4 RNA-binding domain is found at 357 to 414 (ADLMQALVDSELQPSRGQARKTIASNAITINGEKQSDPEYFFKEEDRLFGRFTLLRRG).

It belongs to the class-I aminoacyl-tRNA synthetase family. TyrS type 1 subfamily. Homodimer.

It is found in the cytoplasm. The catalysed reaction is tRNA(Tyr) + L-tyrosine + ATP = L-tyrosyl-tRNA(Tyr) + AMP + diphosphate + H(+). Functionally, catalyzes the attachment of tyrosine to tRNA(Tyr) in a two-step reaction: tyrosine is first activated by ATP to form Tyr-AMP and then transferred to the acceptor end of tRNA(Tyr). This Escherichia coli (strain K12 / DH10B) protein is Tyrosine--tRNA ligase.